A 159-amino-acid chain; its full sequence is ATP synthase subunit b (159 aa).

A helical transmembrane segment spans residues 7–27 (TFVWTIINFLLLLVVLSYFLF).

It belongs to the ATPase B chain family. F-type ATPases have 2 components, F(1) - the catalytic core - and F(0) - the membrane proton channel. F(1) has five subunits: alpha(3), beta(3), gamma(1), delta(1), epsilon(1). F(0) has three main subunits: a(1), b(2) and c(10-14). The alpha and beta chains form an alternating ring which encloses part of the gamma chain. F(1) is attached to F(0) by a central stalk formed by the gamma and epsilon chains, while a peripheral stalk is formed by the delta and b chains.

It is found in the cell membrane. In terms of biological role, f(1)F(0) ATP synthase produces ATP from ADP in the presence of a proton or sodium gradient. F-type ATPases consist of two structural domains, F(1) containing the extramembraneous catalytic core and F(0) containing the membrane proton channel, linked together by a central stalk and a peripheral stalk. During catalysis, ATP synthesis in the catalytic domain of F(1) is coupled via a rotary mechanism of the central stalk subunits to proton translocation. Its function is as follows. Component of the F(0) channel, it forms part of the peripheral stalk, linking F(1) to F(0). In Clostridium novyi (strain NT), this protein is ATP synthase subunit b.